A 208-amino-acid polypeptide reads, in one-letter code: Ribonuclease HII (208 aa).

In terms of domain architecture, RNase H type-2 spans 11–203; that stretch reads GPVAGVDEAG…VAAAHEQWLK (193 aa). Asp17, Glu18, and Asp112 together coordinate a divalent metal cation.

This sequence belongs to the RNase HII family. It depends on Mn(2+) as a cofactor. Mg(2+) is required as a cofactor.

Its subcellular location is the cytoplasm. It carries out the reaction Endonucleolytic cleavage to 5'-phosphomonoester.. Endonuclease that specifically degrades the RNA of RNA-DNA hybrids. The polypeptide is Ribonuclease HII (Corynebacterium jeikeium (strain K411)).